A 175-amino-acid chain; its full sequence is NADH-quinone oxidoreductase subunit I (175 aa).

4Fe-4S ferredoxin-type domains are found at residues 44–74 (LNRYADGLEKCIGCELCAWACPADAIFVEGA) and 90–119 (RVYQINYLRCIGCGLCIEACPTRALTMTND). [4Fe-4S] cluster contacts are provided by Cys54, Cys57, Cys60, Cys64, Cys99, Cys102, Cys105, and Cys109. The interval 148–175 (PPHAMAPGATDEDYYRGTVSPSAEADAR) is disordered.

The protein belongs to the complex I 23 kDa subunit family. In terms of assembly, NDH-1 is composed of 14 different subunits. Subunits NuoA, H, J, K, L, M, N constitute the membrane sector of the complex. Requires [4Fe-4S] cluster as cofactor.

The protein localises to the cell membrane. It carries out the reaction a quinone + NADH + 5 H(+)(in) = a quinol + NAD(+) + 4 H(+)(out). In terms of biological role, NDH-1 shuttles electrons from NADH, via FMN and iron-sulfur (Fe-S) centers, to quinones in the respiratory chain. The immediate electron acceptor for the enzyme in this species is believed to be menaquinone. Couples the redox reaction to proton translocation (for every two electrons transferred, four hydrogen ions are translocated across the cytoplasmic membrane), and thus conserves the redox energy in a proton gradient. This chain is NADH-quinone oxidoreductase subunit I, found in Mycolicibacterium gilvum (strain PYR-GCK) (Mycobacterium gilvum (strain PYR-GCK)).